Here is a 122-residue protein sequence, read N- to C-terminus: Large ribosomal subunit protein uL14 (122 aa).

This sequence belongs to the universal ribosomal protein uL14 family. As to quaternary structure, part of the 50S ribosomal subunit. Forms a cluster with proteins L3 and L19. In the 70S ribosome, L14 and L19 interact and together make contacts with the 16S rRNA in bridges B5 and B8.

Functionally, binds to 23S rRNA. Forms part of two intersubunit bridges in the 70S ribosome. This is Large ribosomal subunit protein uL14 from Pseudothermotoga lettingae (strain ATCC BAA-301 / DSM 14385 / NBRC 107922 / TMO) (Thermotoga lettingae).